We begin with the raw amino-acid sequence, 594 residues long: CRISPR-associated DNA-binding protein Cas12m (594 aa).

Residues 1-85 form a recognition domain (REC1-N) region; that stretch reads MSRLEARTRY…EKVRQVMVFE (85 aa). Residues 86-153 form a recognition domain (REC2) region; sequence SETTKKIKEL…ERSFIFEARK (68 aa). Residues 154 to 211 form a recognition domain (REC1-C) region; it reads QELAQLEKERWAVVKELGKGSGLYWCNLEDVVNSYDIGRKKAKAAGGEMRFHRWDGTG. The wedge domain (WED) stretch occupies residues 212–314; that stretch reads KVTVRFQKGL…RYKLNLVLEI (103 aa). The tract at residues 315–329 is linker; the sequence is LGENTNRILPALEGT. The interval 330 to 540 is ruvC-I; the sequence is AAIDLGWRTV…KNHVEFTYVP (211 aa). The interval 541-575 is target nucleic-acid binding (TNB); the sequence is AENTTITCHKCGHKEKFDAAAQIIHTCSTCGELWD. Zn(2+)-binding residues include Cys-548, Cys-551, Cys-567, and Cys-570. The tract at residues 576–594 is ruvC-II; it reads QDYNAAKNLLAFSQKGGVK. Asp-577 provides a ligand contact to Mg(2+).

It belongs to the CRISPR-associated DNA-binding protein Cas12m family. The cofactor is Mg(2+). Zn(2+) is required as a cofactor.

In terms of biological role, CRISPR (clustered regularly interspaced short palindromic repeat), is an adaptive immune system that provides protection against mobile genetic elements (viruses, transposable elements and conjugative plasmids). CRISPR clusters contain sequences complementary to antecedent mobile elements and target invading nucleic acids. CRISPR clusters are transcribed and processed into CRISPR RNA (crRNA). Recognizes a short motif in the CRISPR repeat sequences (the 5' PAM or protospacer adjacent motif, 5'-C/TCN-3' in this organism) to help distinguish self versus nonself, as targets within the bacterial CRISPR locus do not have PAMs. Upon expression in E.coli as a CRISPR locus inhibits plasmid propagation when targeted to regions essential for plasmid propagation (replication origin but not a selectable marker), probably by inhibiting transcription. Cas12m-crRNA binds DNA in a PAM-dependent, crRNA-guided fashion. Upon expression in E.coli as a CRISPR region preferentially binds to its associated crRNA. Probably required for pre-crRNA processing to mature crRNA. This Thermanaerosceptrum fracticalcis protein is CRISPR-associated DNA-binding protein Cas12m.